Here is a 457-residue protein sequence, read N- to C-terminus: tRNA-2-methylthio-N(6)-dimethylallyladenosine synthase (457 aa).

An MTTase N-terminal domain is found at 3–120; the sequence is KKVYVKTFGC…LPQMIDQRRA (118 aa). [4Fe-4S] cluster contacts are provided by cysteine 12, cysteine 49, cysteine 83, cysteine 157, cysteine 161, and cysteine 164. The Radical SAM core domain occupies 143–377; that stretch reads RVEGPSAFVS…QATIEENVAR (235 aa). A TRAM domain is found at 380-447; sequence RSMVGKVERI…PHSLRGELLL (68 aa).

It belongs to the methylthiotransferase family. MiaB subfamily. In terms of assembly, monomer. It depends on [4Fe-4S] cluster as a cofactor.

Its subcellular location is the cytoplasm. The catalysed reaction is N(6)-dimethylallyladenosine(37) in tRNA + (sulfur carrier)-SH + AH2 + 2 S-adenosyl-L-methionine = 2-methylsulfanyl-N(6)-dimethylallyladenosine(37) in tRNA + (sulfur carrier)-H + 5'-deoxyadenosine + L-methionine + A + S-adenosyl-L-homocysteine + 2 H(+). Functionally, catalyzes the methylthiolation of N6-(dimethylallyl)adenosine (i(6)A), leading to the formation of 2-methylthio-N6-(dimethylallyl)adenosine (ms(2)i(6)A) at position 37 in tRNAs that read codons beginning with uridine. In Burkholderia ambifaria (strain ATCC BAA-244 / DSM 16087 / CCUG 44356 / LMG 19182 / AMMD) (Burkholderia cepacia (strain AMMD)), this protein is tRNA-2-methylthio-N(6)-dimethylallyladenosine synthase.